We begin with the raw amino-acid sequence, 371 residues long: Queuine tRNA-ribosyltransferase (371 aa).

Residue Asp-89 is the Proton acceptor of the active site. Substrate contacts are provided by residues 89–93 (DSGGF), Asp-143, Gln-185, and Gly-212. Residues 243 to 249 (GVGKPED) are RNA binding. The Nucleophile role is filled by Asp-262. The interval 267 to 271 (TRNAR) is RNA binding; important for wobble base 34 recognition. Residues Cys-300, Cys-302, Cys-305, and His-331 each contribute to the Zn(2+) site.

The protein belongs to the queuine tRNA-ribosyltransferase family. In terms of assembly, homodimer. Within each dimer, one monomer is responsible for RNA recognition and catalysis, while the other monomer binds to the replacement base PreQ1. Zn(2+) is required as a cofactor.

The enzyme catalyses 7-aminomethyl-7-carbaguanine + guanosine(34) in tRNA = 7-aminomethyl-7-carbaguanosine(34) in tRNA + guanine. The protein operates within tRNA modification; tRNA-queuosine biosynthesis. Catalyzes the base-exchange of a guanine (G) residue with the queuine precursor 7-aminomethyl-7-deazaguanine (PreQ1) at position 34 (anticodon wobble position) in tRNAs with GU(N) anticodons (tRNA-Asp, -Asn, -His and -Tyr). Catalysis occurs through a double-displacement mechanism. The nucleophile active site attacks the C1' of nucleotide 34 to detach the guanine base from the RNA, forming a covalent enzyme-RNA intermediate. The proton acceptor active site deprotonates the incoming PreQ1, allowing a nucleophilic attack on the C1' of the ribose to form the product. After dissociation, two additional enzymatic reactions on the tRNA convert PreQ1 to queuine (Q), resulting in the hypermodified nucleoside queuosine (7-(((4,5-cis-dihydroxy-2-cyclopenten-1-yl)amino)methyl)-7-deazaguanosine). The protein is Queuine tRNA-ribosyltransferase of Azotobacter vinelandii (strain DJ / ATCC BAA-1303).